Reading from the N-terminus, the 134-residue chain is Phosphoribosyl-AMP cyclohydrolase (134 aa).

Asp-80 serves as a coordination point for Mg(2+). Cys-81 serves as a coordination point for Zn(2+). Residues Asp-82 and Asp-84 each coordinate Mg(2+). Residues Cys-98 and Cys-105 each coordinate Zn(2+).

It belongs to the PRA-CH family. Homodimer. Requires Mg(2+) as cofactor. Zn(2+) is required as a cofactor.

The protein resides in the cytoplasm. The enzyme catalyses 1-(5-phospho-beta-D-ribosyl)-5'-AMP + H2O = 1-(5-phospho-beta-D-ribosyl)-5-[(5-phospho-beta-D-ribosylamino)methylideneamino]imidazole-4-carboxamide. Its pathway is amino-acid biosynthesis; L-histidine biosynthesis; L-histidine from 5-phospho-alpha-D-ribose 1-diphosphate: step 3/9. In terms of biological role, catalyzes the hydrolysis of the adenine ring of phosphoribosyl-AMP. The protein is Phosphoribosyl-AMP cyclohydrolase of Bordetella pertussis (strain Tohama I / ATCC BAA-589 / NCTC 13251).